We begin with the raw amino-acid sequence, 98 residues long: Feather beta keratin (98 aa).

The residue at position 2 (serine 2) is an N-acetylserine.

This sequence belongs to the avian keratin family. The avian keratins (F-ker, S-ker, C-ker and B-ker) are a complex mixture of very similar polypeptides.

The sequence is that of Feather beta keratin from Mycteria americana (Wood stork).